The following is a 374-amino-acid chain: Aclacinomycin 10-hydroxylase RdmB (374 aa).

S-adenosyl-L-methionine-binding residues include Tyr-171, Gly-190, Glu-213, Asp-240, Phe-241, and Ser-255.

It belongs to the class I-like SAM-binding methyltransferase superfamily. Cation-independent O-methyltransferase family. As to quaternary structure, homodimer. Homotetramer in solution. Tetramers might not be very stable in solution.

The enzyme catalyses 15-demethylaclacinomycin T + AH2 + O2 = 10-decarboxymethylaclacinomycin T + A + CO2 + H2O. It carries out the reaction 10-carboxy-13-deoxycarminomycin + AH2 + O2 + H(+) = 10-hydroxy-13-deoxycarminomycin + A + CO2 + H2O. It catalyses the reaction 10-hydroxy-13-deoxycarminomycin + S-adenosyl-L-methionine = 10-hydroxy-13-deoxydaunorubicin + S-adenosyl-L-homocysteine + H(+). Its pathway is antibiotic biosynthesis; rhodomycin biosynthesis. It participates in antibiotic biosynthesis; aclacinomycin biosynthesis. Its activity is regulated as follows. The hydroxylation reaction requires S-adenosyl-L-methionine (SAM) as a cofactor. S-adenosine-L-homocysteine and sinefungin (a SAM analog) can also support the decarboxylative hydroxylation activity with 10-carboxy-13-deoxycarminomycin as substrate. SAM and its analogs are considered an essential structural ligand to maintain ternary structural integrity and the proper binding mode and orientation of electron-rich substrates during decarboxylative hydroxylation of C-10 by RdmB. In terms of biological role, involved in the biosynthesis of anthracyclines, an important group of aromatic polyketide antibiotics used in cancer chemotherapy. Acts as a 10-hydroxylase to catalyze a decarboxylative hydroxylation reaction on anthracyclines. During biosynthesis of rhodomycin, it catalyzes the removal of the carboxylic group at the C-10 position of 15-demethoxy-epsilon-rhodomycin coupled to hydroxylation at the same C-10 position to yield beta-rhodomycin. In vitro, can also catalyze the removal of the carboxylic group at the C-10 position of 15-demethoxyaclacinomycin T coupled to hydroxylation at the same C-10 position to yield 10-decarboxymethylaclacinomycin T. It can also use 10-carboxy-13-deoxycarminomycin, an analog of 15-demethoxy-epsilon-rhodomycin, to yield 10-hydroxy-13-deoxycarminomycin. In addition to its hydroxylation activity, it can act in vitro as a S-adenosyl-L-methionine-dependent O-methyltransferase and catalyze the 4-O-methylation of 10-hydroxy-13-deoxycarminomycin to 10-hydroxy-13-deoxydaunorubicin. The triglycosyl group of anthracyclines prevents the methylation reaction. The sequence is that of Aclacinomycin 10-hydroxylase RdmB from Streptomyces purpurascens.